The sequence spans 293 residues: 4-diphosphocytidyl-2-C-methyl-D-erythritol kinase (293 aa).

Lys16 is an active-site residue. 99-109 (PMGAGLGGGSS) serves as a coordination point for ATP. The active site involves Asp141.

It belongs to the GHMP kinase family. IspE subfamily.

It carries out the reaction 4-CDP-2-C-methyl-D-erythritol + ATP = 4-CDP-2-C-methyl-D-erythritol 2-phosphate + ADP + H(+). Its pathway is isoprenoid biosynthesis; isopentenyl diphosphate biosynthesis via DXP pathway; isopentenyl diphosphate from 1-deoxy-D-xylulose 5-phosphate: step 3/6. Functionally, catalyzes the phosphorylation of the position 2 hydroxy group of 4-diphosphocytidyl-2C-methyl-D-erythritol. In Burkholderia ambifaria (strain MC40-6), this protein is 4-diphosphocytidyl-2-C-methyl-D-erythritol kinase.